Reading from the N-terminus, the 445-residue chain is Phosphoglucosamine mutase (445 aa).

Serine 102 (phosphoserine intermediate) is an active-site residue. Mg(2+)-binding residues include serine 102, aspartate 241, aspartate 243, and aspartate 245. Serine 102 carries the phosphoserine modification.

This sequence belongs to the phosphohexose mutase family. The cofactor is Mg(2+). Activated by phosphorylation.

It catalyses the reaction alpha-D-glucosamine 1-phosphate = D-glucosamine 6-phosphate. In terms of biological role, catalyzes the conversion of glucosamine-6-phosphate to glucosamine-1-phosphate. The chain is Phosphoglucosamine mutase from Photorhabdus laumondii subsp. laumondii (strain DSM 15139 / CIP 105565 / TT01) (Photorhabdus luminescens subsp. laumondii).